The following is a 246-amino-acid chain: Short chain dehydrogenase/reductase dmxR12 (246 aa).

Residues Ile15, Ser34, Lys125, and Lys164 each coordinate NADP(+). The Lowers pKa of active site Tyr role is filled by Lys164.

Belongs to the short-chain dehydrogenases/reductases (SDR) family.

It participates in secondary metabolite biosynthesis. Its function is as follows. Short chain dehydrogenase/reductase; part of the gene cluster that mediates the biosynthesis of the dimeric xanthones cryptosporioptides. The pathway begins with the synthesis of atrochrysone thioester by the polyketide synthase dmx-nrPKS. The atrochrysone carboxyl ACP thioesterase dmxR1 then breaks the thioester bond and releases the atrochrysone carboxylic acid from dmx-nrPKS. Atrochrysone carboxylic acid is decarboxylated by the decarboxylase dmxR15, and oxidized by the anthrone oxygenase dmxR16 to yield emodin. Emodin is then reduced to emodin hydroquinone by the oxidoreductase dmxR7. A-ring reduction by the short chain dehydrogenase dmxR18, dehydration by the scytalone dehydratase-like protein dmxR17 and probable spontaneous re-oxidation, results in overall deoxygenation to chrysophanol. Baeyer-Villiger oxidation by the Baeyer-Villiger monooxygenase (BVMO) dmxR6 then yields monodictylactone in equilibrium with monodictyphenone. In the case of the cryptosporioptides biosynthesis, monodictylactone is reduced at C-12 to an alcohol (by the short chain dehydrogenases dmxR12 or dmxR8) and hydroxylated at C-5 by dmxR9, yielding the electron-rich aromatic which could eliminate H(2)O to form the ortho-quinonemethide, followed by tautomerisation to paraquinone and complete the formal reduction to produce the 10-methylgroup. Conjugate addition of C-4a-OH to the resulting paraquinone by the monooxygenase dmxR10 then gives cyclohexadienone, which is then reduced at C-5 by the short chain dehydrogenase dmxR3 to give the dihydroxanthone. The 6,7-epoxide in the cryptosporioptides could be introduced by the cytochrome P450 monooxygenase dmxL3. The highly reducing PKS dmxL2 manufactures butyrate, which is further carboxylated by dmxL1 to form ethylmalonate. It is not yet clear whether the carboxylation occurs while the butyrate is attached to the ACP of dmxL2, but this unusual fungal metabolite could then be esterified to O-5 by the O-acetyltransferase dmxR13. Finally, dimerization performed by dmxR5 gives the observed dimers cryptosporioptides A, B and C as the final products of the pathway. The polypeptide is Short chain dehydrogenase/reductase dmxR12 (Cryptosporiopsis sp. (strain 8999)).